The chain runs to 334 residues: MNRTIRRHTLRALLAALCIAPLGMQGAARADAPLKIGFLVKMPEQAWFINEQNAASALGQKENFSVVKIGTPDGEKVLAAIDNLGSQGAQGFVICAPDVRLGPAIAARAKRYNMKFVTVDDQLVDSTGKPLPNVPHLGMSATKIGNQVGQAISDEMKRRGWKPEEVGALRITNYELPTAKLRTDGATQALLANGFRKENIFDAPQKTTDDEGGFSAAAPVLARHPNVKKWVVYALNEETVLGAVRATEQLHIPAADVIGVGINGAGEAFAEFQKKEPTGFYGTIAVSSTNHGKDSTQNLVEWIRDGKTPPADTQTSGKLMTRANWQAVRAELGI.

The N-terminal stretch at 1-30 is a signal peptide; the sequence is MNRTIRRHTLRALLAALCIAPLGMQGAARA.

Belongs to the bacterial solute-binding protein 2 family. The complex is composed of two ATP-binding proteins (AraG), two transmembrane proteins (AraH) and a solute-binding protein (AraF).

The protein localises to the periplasm. In terms of biological role, part of the ABC transporter complex AraFGH involved in L-arabinose import. Binds with high affinity to L-arabinose. The sequence is that of ABC transporter L-arabinose-binding periplasmic protein (araF) from Azospirillum brasilense.